The primary structure comprises 395 residues: Alanine racemase 2 (395 aa).

Lysine 60 functions as the Proton acceptor; specific for D-alanine in the catalytic mechanism. Position 60 is an N6-(pyridoxal phosphate)lysine (lysine 60). Position 158 (arginine 158) interacts with substrate. Residue tyrosine 288 is the Proton acceptor; specific for L-alanine of the active site. Methionine 332 serves as a coordination point for substrate.

This sequence belongs to the alanine racemase family. Pyridoxal 5'-phosphate is required as a cofactor.

The enzyme catalyses L-alanine = D-alanine. The protein operates within amino-acid biosynthesis; D-alanine biosynthesis; D-alanine from L-alanine: step 1/1. Catalyzes the interconversion of L-alanine and D-alanine. May also act on other amino acids. The chain is Alanine racemase 2 (alr2) from Clostridium acetobutylicum (strain ATCC 824 / DSM 792 / JCM 1419 / IAM 19013 / LMG 5710 / NBRC 13948 / NRRL B-527 / VKM B-1787 / 2291 / W).